Consider the following 355-residue polypeptide: UDP-3-O-acylglucosamine N-acyltransferase (355 aa).

Residue His-258 is the Proton acceptor of the active site.

This sequence belongs to the transferase hexapeptide repeat family. LpxD subfamily. In terms of assembly, homotrimer.

The catalysed reaction is a UDP-3-O-[(3R)-3-hydroxyacyl]-alpha-D-glucosamine + a (3R)-hydroxyacyl-[ACP] = a UDP-2-N,3-O-bis[(3R)-3-hydroxyacyl]-alpha-D-glucosamine + holo-[ACP] + H(+). The protein operates within bacterial outer membrane biogenesis; LPS lipid A biosynthesis. Functionally, catalyzes the N-acylation of UDP-3-O-acylglucosamine using 3-hydroxyacyl-ACP as the acyl donor. Is involved in the biosynthesis of lipid A, a phosphorylated glycolipid that anchors the lipopolysaccharide to the outer membrane of the cell. The protein is UDP-3-O-acylglucosamine N-acyltransferase of Bradyrhizobium diazoefficiens (strain JCM 10833 / BCRC 13528 / IAM 13628 / NBRC 14792 / USDA 110).